The sequence spans 372 residues: Cobalt-precorrin-5B C(1)-methyltransferase (372 aa).

Belongs to the CbiD family.

It catalyses the reaction Co-precorrin-5B + S-adenosyl-L-methionine = Co-precorrin-6A + S-adenosyl-L-homocysteine. It participates in cofactor biosynthesis; adenosylcobalamin biosynthesis; cob(II)yrinate a,c-diamide from sirohydrochlorin (anaerobic route): step 6/10. Catalyzes the methylation of C-1 in cobalt-precorrin-5B to form cobalt-precorrin-6A. The chain is Cobalt-precorrin-5B C(1)-methyltransferase from Prochlorococcus marinus subsp. pastoris (strain CCMP1986 / NIES-2087 / MED4).